We begin with the raw amino-acid sequence, 325 residues long: Small ribosomal subunit protein uS3 (325 aa).

Positions 38-106 constitute a KH type-2 domain; the sequence is IRKMMSKGME…QVQLNILEVK (69 aa). Residues 217 to 325 form a disordered region; sequence EALLRQQRRE…AQGAPEKAEG (109 aa). The segment covering 222–232 has biased composition (basic residues); the sequence is QQRRERPRRGP. Positions 285 to 316 are enriched in low complexity; it reads TESAAVEGTPVETPAVTPETTAAPAAVTTAEA.

The protein belongs to the universal ribosomal protein uS3 family. In terms of assembly, part of the 30S ribosomal subunit. Forms a tight complex with proteins S10 and S14.

Its function is as follows. Binds the lower part of the 30S subunit head. Binds mRNA in the 70S ribosome, positioning it for translation. The chain is Small ribosomal subunit protein uS3 from Parafrankia sp. (strain EAN1pec).